Here is a 1182-residue protein sequence, read N- to C-terminus: MESLLENPVRAVLYLKELTAIVQNQQSLIHTQRERIDELERRLDELSAENRSLWEHQQLLQAQPPPGLVPPSSAPLPAAPATAPAAAARAQEPLQDQGQRSAAAPHPAPDRPPRQHHGQLLEQPQRGPGSRAHTPQSPHKHLGTQGAVTDKEKERPPSCCAAAGALLQHKSPSALGKGVLSRRPENETVLHQFCCPAADACSDLASQSDGSCTQAGGGMEDSVVAAAAVAAGRPSAHAPKAQAQELQEEEERPGAGAASPRAGPQHKASPGRQQPALATALCPHAPAASDYELSLDLKNKQIEMLEHKYGGHLVSRRAACTIQTAFRQYQLSKNFEKIRNSLLESRLPRRISLRKVRSPTAESLAAEKALMEGYGLVGLPLVRSPSLPPTFAGTLTELEDSFTEQVQSLAKSIDDALSTWSLKTMCSLRESGAYQLHQALQAAAGPPGLEAEGRAPESAGPGPGDDAAETPGLPPAHSGTLMMAFRDVTVQIANQNISVSSSTALSVANCLGAQTVQAPAEPAAGKAEQGETSGREAPEAPAVGREDASAEDSCAEAAASGAADGATAPKTEEEEEEEETAEVGRGAEAEAGDLEQLSSSSTSTKSAKSGSEASASASKDALQAMILSLPRYHCENPASCKSPTLSTDTLRKRLYRIGLNLFNINPDKGIQFLISRGFIPDTPIGVAHFLLQRKGLSRQMIGEFLGNSKKQFNRDVLDCVVDEMDFSSMELDEALRKFQAHIRVQGEAQKVERLIEAFSQRYCMCNPEVVQQFHNPDTIFILAFAIILLNTDMYSPNIKPDRKMMLEDFIRNLRGVDDGADIPRELVVGIYERIQQKELKSNEDHVTYVTKVEKSIVGMKTVLSVPHRRLVCCSRLFEVTDVNKLQKQAAHQREVFLFNDLLVILKLCPKKKSSSTYTFCKSVGLLGMQFQLFENEYYSHGITLVTPLSGSEKKQVLHFCALGSDEMQKFVEDLKESIAEVTELEQIRIEWELEKQQGTKTLSFKPCGAQGDPQSKQGSPTAKREAALRERPAESTVEVSIHNRLQTSQHNSGLGAERGAPVPPPDLQPSPPRQQTPPLPPPPPTPPGTLVQCQQIVKVIVLDKPCLARMEPLLSQALSCYTSSSSDSCGSTPLGGPGSPVKVTHQPPLPPPPPPYNHPHQFCPPGSLLHGHRYSSGSRSLV.

Positions Ala-20–His-56 form a coiled coil. 2 disordered regions span residues Ala-62–Pro-157 and Ala-230–Pro-275. The span at Gln-63–Ala-78 shows a compositional bias: pro residues. 2 stretches are compositionally biased toward low complexity: residues Ala-79–Pro-105 and Gly-254–Gly-263. Residue Ser-259 is modified to Phosphoserine. The region spanning Ser-315–Glu-344 is the IQ domain. 2 disordered regions span residues Ala-444–Gly-479 and Glu-521–Ser-616. The segment covering Ser-533–Ala-548 has biased composition (basic and acidic residues). Residues Ala-555–Pro-569 show a composition bias toward low complexity. The span at Glu-572–Ala-581 shows a compositional bias: acidic residues. Residues Ser-598 to Ser-616 show a composition bias toward low complexity. Residues Thr-644–Lys-837 form the SEC7 domain. Residues Thr-850–Glu-983 form the PH domain. Residues Ser-964–Glu-992 are a coiled coil. Disordered regions lie at residues Leu-1002–Leu-1090 and Tyr-1121–Val-1182. Basic and acidic residues predominate over residues Ala-1022 to Ala-1033. Residues Asn-1043–Ser-1052 are compositionally biased toward polar residues. Residues Pro-1061–Pro-1087 show a composition bias toward pro residues. The span at Tyr-1121 to Thr-1132 shows a compositional bias: low complexity. Residues Pro-1147–Asn-1157 show a composition bias toward pro residues.

The protein belongs to the BRAG family. As to quaternary structure, interacts with DLG1 and DLG4. Interacts with GPHN. As to expression, expressed specifically in the adult brain, predominantly in the cerebral cortex and the olfactory bulb, but not in the fetal brain. Expressed only in mature neurons, but not in undifferentiated neural stem precursor cells (NSPCs), nor in glioma cells.

It is found in the cytoplasm. Its subcellular location is the postsynaptic density. In terms of biological role, acts as a guanine nucleotide exchange factor (GEF) for ARF1. This chain is IQ motif and SEC7 domain-containing protein 3 (IQSEC3), found in Homo sapiens (Human).